The primary structure comprises 150 residues: Arginine repressor (150 aa).

It belongs to the ArgR family.

It is found in the cytoplasm. It participates in amino-acid biosynthesis; L-arginine biosynthesis [regulation]. Functionally, regulates arginine biosynthesis genes. The chain is Arginine repressor from Clostridium botulinum (strain 657 / Type Ba4).